The chain runs to 189 residues: Potassium-transporting ATPase KdpC subunit (189 aa).

Residues 6 to 26 (PAILLFIMFTIICGGIYPALV) form a helical membrane-spanning segment.

Belongs to the KdpC family. In terms of assembly, the system is composed of three essential subunits: KdpA, KdpB and KdpC.

The protein resides in the cell inner membrane. In terms of biological role, part of the high-affinity ATP-driven potassium transport (or Kdp) system, which catalyzes the hydrolysis of ATP coupled with the electrogenic transport of potassium into the cytoplasm. This subunit acts as a catalytic chaperone that increases the ATP-binding affinity of the ATP-hydrolyzing subunit KdpB by the formation of a transient KdpB/KdpC/ATP ternary complex. The protein is Potassium-transporting ATPase KdpC subunit of Trichlorobacter lovleyi (strain ATCC BAA-1151 / DSM 17278 / SZ) (Geobacter lovleyi).